The primary structure comprises 284 residues: HTH-type transcriptional activator RhaR (284 aa).

Residues 181–279 (DMLMNALRAS…GVSPSAYRQR (99 aa)) enclose the HTH araC/xylS-type domain. 2 consecutive DNA-binding regions (H-T-H motif) follow at residues 198–219 (EAFCEQHHFSARSLRSRFKEQT) and 246–269 (IGDIAALCGFEDSNYFSVVFHQAF).

In terms of assembly, binds DNA as a dimer.

It localises to the cytoplasm. In terms of biological role, activates expression of the rhaSR operon in response to L-rhamnose. In Pectobacterium carotovorum subsp. carotovorum (strain PC1), this protein is HTH-type transcriptional activator RhaR.